A 133-amino-acid polypeptide reads, in one-letter code: Magnetosome protein MamC (133 aa).

The Cytoplasmic portion of the chain corresponds to 1-5 (MAAFN). A helical transmembrane segment spans residues 6–26 (LALYLSKSIPGVGVLGGVIGG). At 27–67 (SAALAKNLKAKQRGEITTEEAVIDTGKEALGAGLATTVSAY) the chain is on the lumenal side. The interval 37–57 (KQRGEITTEEAVIDTGKEALG) is magnetite interacting component (MIC) binds magnetite. The helical transmembrane segment at 68-88 (AAGVVGGGLVVSLGTAFAVAV) threads the bilayer. Topologically, residues 89 to 133 (AGKYAWDYGMEQMEAKLQEKKHQEQGGQTYGDNPDPFDPQELETP) are cytoplasmic. The interval 105-133 (LQEKKHQEQGGQTYGDNPDPFDPQELETP) is disordered.

Belongs to the magnetosome MamC family. As to quaternary structure, probably interacts with MamA.

The protein resides in the magnetosome membrane. Functionally, probably helps control the size of magnetite crystals; in vitro synthesis of magnetite yields larger and more well-developed magnetite crystals in the presence of purified MamC. Binds Fe(3+). The lumenal domain probably binds magnetite crystals, affecting crystal size and shape. Purified MamC self-assembles into micelles in the presence of ferric chloride hexahydrate (FeCl(3).6H(2)O); both oxygen and iron are present in the proteinaceous micelles. Whether this is relevant in vivo is unknown. This chain is Magnetosome protein MamC, found in Magnetococcus marinus (strain ATCC BAA-1437 / JCM 17883 / MC-1).